Reading from the N-terminus, the 661-residue chain is UvrABC system protein B (661 aa).

A Helicase ATP-binding domain is found at 25–182 (KGLNNKKRSQ…NDLVNLQYER (158 aa)). 38-45 (GITGSGKT) contacts ATP. Positions 91 to 114 (YYDYYQPEAYIPKTDVFIEKDSSI) match the Beta-hairpin motif. A Helicase C-terminal domain is found at 430–592 (QVEDLVGEIQ…IIPKTINRTI (163 aa)). Residues 621 to 656 (KAHIDKLRKEMLKAASNLEFEQAAKLRDQLKTLEEA) enclose the UVR domain.

The protein belongs to the UvrB family. In terms of assembly, forms a heterotetramer with UvrA during the search for lesions. Interacts with UvrC in an incision complex.

It localises to the cytoplasm. Its function is as follows. The UvrABC repair system catalyzes the recognition and processing of DNA lesions. A damage recognition complex composed of 2 UvrA and 2 UvrB subunits scans DNA for abnormalities. Upon binding of the UvrA(2)B(2) complex to a putative damaged site, the DNA wraps around one UvrB monomer. DNA wrap is dependent on ATP binding by UvrB and probably causes local melting of the DNA helix, facilitating insertion of UvrB beta-hairpin between the DNA strands. Then UvrB probes one DNA strand for the presence of a lesion. If a lesion is found the UvrA subunits dissociate and the UvrB-DNA preincision complex is formed. This complex is subsequently bound by UvrC and the second UvrB is released. If no lesion is found, the DNA wraps around the other UvrB subunit that will check the other stand for damage. In Rickettsia bellii (strain RML369-C), this protein is UvrABC system protein B.